Consider the following 99-residue polypeptide: Large ribosomal subunit protein bL27 (99 aa).

The propeptide occupies 1-10; that stretch reads MKLIFDIQLF.

The protein belongs to the bacterial ribosomal protein bL27 family. The N-terminus is cleaved by ribosomal processing cysteine protease Prp.

The sequence is that of Large ribosomal subunit protein bL27 from Caldicellulosiruptor saccharolyticus (strain ATCC 43494 / DSM 8903 / Tp8T 6331).